A 228-amino-acid polypeptide reads, in one-letter code: DOPA 4,5-dioxygenase (228 aa).

In terms of assembly, homodimer. In terms of tissue distribution, expressed at high level in coloured cap tissue and at least 10 times lower level in the stipe.

The protein localises to the cytoplasm. It functions in the pathway pigment biosynthesis; betalain biosynthesis. In terms of biological role, extradiol dioxygenase that opens up the cyclic ring of DOPA between carbons 4 and 5 thus producing an unstable seco-DOPA that rearranges non-enzymatically to betalamic acid. Can also catalyze the formation of muscaflavin (a pigment found in the hygrocybe mushrooms family and of some amanita species only) by a 2,3-extradiol cleavage of DOPA. This Amanita muscaria (Fly agaric) protein is DOPA 4,5-dioxygenase (DODA).